Reading from the N-terminus, the 193-residue chain is Probable GTP-binding protein EngB (193 aa).

In terms of domain architecture, EngB-type G spans 19–188 (SVKEVCFMGR…HKQIFELFKA (170 aa)). Residues 27–34 (GRSNVGKS), 53–57 (GRTQL), 70–73 (DLPG), 136–139 (NKFD), and 167–169 (VSA) contribute to the GTP site. Residues serine 34 and threonine 55 each contribute to the Mg(2+) site.

The protein belongs to the TRAFAC class TrmE-Era-EngA-EngB-Septin-like GTPase superfamily. EngB GTPase family. Mg(2+) serves as cofactor.

Functionally, necessary for normal cell division and for the maintenance of normal septation. The protein is Probable GTP-binding protein EngB of Mycoplasma pneumoniae (strain ATCC 29342 / M129 / Subtype 1) (Mycoplasmoides pneumoniae).